The sequence spans 99 residues: Large ribosomal subunit protein eL30 (99 aa).

This sequence belongs to the eukaryotic ribosomal protein eL30 family. In terms of assembly, part of the 50S ribosomal subunit.

The chain is Large ribosomal subunit protein eL30 from Pyrococcus furiosus (strain ATCC 43587 / DSM 3638 / JCM 8422 / Vc1).